The following is a 287-amino-acid chain: Isopentenyl-diphosphate Delta-isomerase 1, chloroplastic (287 aa).

Residues 1-51 (MTLLLNTTAKLYIAPRTLPFTSSSTFARSPFLRIPSLLKPLSPLTARVSLS) constitute a chloroplast transit peptide. Lys-90 provides a ligand contact to substrate. Mg(2+) contacts are provided by His-94 and His-106. Positions 104 to 256 (LLHRAFSVFL…GLKLSPWFRL (153 aa)) constitute a Nudix hydrolase domain. The substrate site is built by Arg-125 and Lys-129. The active site involves Cys-141. Ser-142 serves as a coordination point for substrate. Residues 142 to 172 (SHPLYRESELIDEESLGARNAAQRKLLDELG) carry the Nudix box motif. Mg(2+) is bound by residues Glu-201 and Glu-203. Glu-203 is an active-site residue.

Belongs to the IPP isomerase type 1 family. Monomer. The cofactor is Mg(2+). As to expression, mainly expressed in roots and trichomes and, to a lower extent, in leaves, flowers and stems.

Its subcellular location is the plastid. The protein localises to the chloroplast. The enzyme catalyses isopentenyl diphosphate = dimethylallyl diphosphate. It functions in the pathway isoprenoid biosynthesis; dimethylallyl diphosphate biosynthesis; dimethylallyl diphosphate from isopentenyl diphosphate: step 1/1. The protein operates within porphyrin-containing compound metabolism; chlorophyll biosynthesis. Its function is as follows. Catalyzes the 1,3-allylic rearrangement of the homoallylic substrate isopentenyl (IPP) to its highly electrophilic allylic isomer, dimethylallyl diphosphate (DMAPP). The polypeptide is Isopentenyl-diphosphate Delta-isomerase 1, chloroplastic (Cannabis sativa (Hemp)).